Consider the following 333-residue polypeptide: Diacylglycerol acyltransferase/mycolyltransferase Ag85C (333 aa).

Positions 1–44 (MKFLQQMRKLFGLAAKFPARLTIAVIGTALLAGLVGVVGDTAIA) are cleaved as a signal peptide. Substrate is bound at residue 86–87 (LR). Residues 102–112 (FEEYYHSGLSV) are fibronectin-binding. Residues serine 170 and asparagine 198 each contribute to the substrate site. Serine 170 serves as the catalytic Nucleophile. Residue glutamate 274 is part of the active site. Residues 276–279 (LTLS) and 306–308 (HSW) contribute to the substrate site. Residue histidine 306 is part of the active site.

Belongs to the mycobacterial A85 antigen family. In terms of assembly, homodimer.

Its subcellular location is the secreted. The enzyme catalyses an acyl-CoA + a 1,2-diacyl-sn-glycerol = a triacyl-sn-glycerol + CoA. It carries out the reaction 2 alpha,alpha'-trehalose 6-mycolate = alpha,alpha'-trehalose 6,6'-bismycolate + alpha,alpha-trehalose. Functionally, the antigen 85 proteins (FbpA, FbpB, FbpC) are responsible for the high affinity of mycobacteria to fibronectin, a large adhesive glycoprotein, which facilitates the attachment of M.tuberculosis to murine alveolar macrophages (AMs). They also help to maintain the integrity of the cell wall by catalyzing the transfer of mycolic acids to cell wall arabinogalactan and through the synthesis of alpha,alpha-trehalose dimycolate (TDM, cord factor). They catalyze the transfer of a mycoloyl residue from one molecule of alpha,alpha-trehalose monomycolate (TMM) to another TMM, leading to the formation of TDM. This chain is Diacylglycerol acyltransferase/mycolyltransferase Ag85C (fbpC), found in Mycobacterium leprae (strain TN).